The following is a 1859-amino-acid chain: U3 small nucleolar RNA-associated protein 10 (1859 aa).

Residues 258-278 (LGAYSVLAVLSAVAPLSIELL) traverse the membrane as a helical segment. The stretch at 578 to 616 (VLPLLLIAFNDPSSHIRAAFAQLVQLVSEITKAIHENKK) is one HEAT 1 repeat. The helical transmembrane segment at 1392 to 1412 (IVIASISAIVSIVNVLGIKTL) threads the bilayer. Residues 1819–1857 (LVPHIAELLEDDDEAVEIEVREGLVRVIEKVLGEPLDRY) form an HEAT 2 repeat.

Belongs to the HEATR1/UTP10 family. Component of the ribosomal small subunit (SSU) processome.

Its subcellular location is the nucleus. The protein localises to the nucleolus. The protein resides in the membrane. Its function is as follows. Involved in nucleolar processing of pre-18S ribosomal RNA. Involved in ribosome biosynthesis. This chain is U3 small nucleolar RNA-associated protein 10, found in Lodderomyces elongisporus (strain ATCC 11503 / CBS 2605 / JCM 1781 / NBRC 1676 / NRRL YB-4239) (Yeast).